Here is a 300-residue protein sequence, read N- to C-terminus: Cation-efflux pump FieF (300 aa).

The chain crosses the membrane as a helical span at residues 24-44 (LLIKIFAWWYTGSVSILAALV). The Zn(2+) site is built by Asp-45 and Asp-49. Helical transmembrane passes span 82–102 (AALA…LTSI) and 114–134 (PGVG…LVTF). Zn(2+) is bound by residues His-153 and Asp-157. The next 2 membrane-spanning stretches (helical) occupy residues 156 to 176 (SDVM…YGWH) and 178 to 198 (ADAL…LRMG).

The protein belongs to the cation diffusion facilitator (CDF) transporter (TC 2.A.4) family. FieF subfamily. As to quaternary structure, homodimer.

The protein localises to the cell inner membrane. The enzyme catalyses Zn(2+)(in) + H(+)(out) = Zn(2+)(out) + H(+)(in). The catalysed reaction is Cd(2+)(in) + H(+)(out) = Cd(2+)(out) + H(+)(in). It carries out the reaction Fe(2+)(in) + H(+)(out) = Fe(2+)(out) + H(+)(in). Functionally, divalent metal cation transporter which exports Zn(2+), Cd(2+) and possibly Fe(2+). May be involved in zinc and iron detoxification by efflux. In Salmonella schwarzengrund (strain CVM19633), this protein is Cation-efflux pump FieF.